The following is a 466-amino-acid chain: MAKTLYEKLFDTHVVYEAENETPLLYIDRHLVHEVTSPQAFDGLRAHGRPVRQPGKTFATMDHNVSTQTKDINACGEMARIQMQELIKNCKEFGVELYDLNHPYQGIVHVMGPEQGVTLPGMTIVCGDSHTATHGAFGALAFGIGTSEVEHVLATQTLKQGRAKTMKIEVQGKAAPGITAKDIVLAIIGKTGSAGGTGHVVEFCGEAIRDLSMEGRMTLCNMAIEMGAKAGLVAPDETTFNYVKGRLHAPKGKDFDDAVAYWKTLQTDEGATFDTVVTLQAEEISPQVTWGTNPGQVISVNDNIPDPASFADPVERALAEKALAYMGLKPGIPLTEVAIDKVFIGSCTNSRIEDLRAAAEIAKGRKVAPGVQALVVPGSGPVKAQAEAEGLDKIFIEAGFEWRLPGCSMCLAMNNDRLNPGERCASTSNRNFEGRQGRGGRTHLVSPAMAAAAAVTGHFADIRNIK.

3 residues coordinate [4Fe-4S] cluster: cysteine 347, cysteine 407, and cysteine 410.

This sequence belongs to the aconitase/IPM isomerase family. LeuC type 1 subfamily. In terms of assembly, heterodimer of LeuC and LeuD. Requires [4Fe-4S] cluster as cofactor.

The enzyme catalyses (2R,3S)-3-isopropylmalate = (2S)-2-isopropylmalate. The protein operates within amino-acid biosynthesis; L-leucine biosynthesis; L-leucine from 3-methyl-2-oxobutanoate: step 2/4. Functionally, catalyzes the isomerization between 2-isopropylmalate and 3-isopropylmalate, via the formation of 2-isopropylmaleate. This chain is 3-isopropylmalate dehydratase large subunit, found in Shigella dysenteriae serotype 1 (strain Sd197).